The primary structure comprises 417 residues: UPF0597 protein Cphy_1256 (417 aa).

It belongs to the UPF0597 family.

The polypeptide is UPF0597 protein Cphy_1256 (Lachnoclostridium phytofermentans (strain ATCC 700394 / DSM 18823 / ISDg) (Clostridium phytofermentans)).